Here is a 1186-residue protein sequence, read N- to C-terminus: Tricalbin-1 (1186 aa).

Residues 1–50 (MAKEDTGVTAPKKPETAQVANINGIDKLEPPKTKEETESSKSVSSEKAAH) are disordered. At 1–106 (MAKEDTGVTA…NIIPDSLYGD (106 aa)) the chain is on the cytoplasmic side. Residues 26–39 (DKLEPPKTKEETES) show a composition bias toward basic and acidic residues. The chain crosses the membrane as a helical span at residues 107–127 (WYHSVAIFFIGGVASFALGHY). Lys-128 is a topological domain (extracellular). Residues 129–149 (FSMGSAFFVIVITSLLYRTSA) form a helical membrane-spanning segment. Over 150 to 1186 (KKYRGSIREL…HEMGEEETKF (1037 aa)) the chain is Cytoplasmic. Positions 172–375 (DYESLEWLNA…PPFSLQLNIP (204 aa)) constitute an SMP-LTD domain. C2 domains follow at residues 366 to 487 (PPFS…RNLK), 512 to 636 (EKKL…IKIT), and 640 to 757 (RPVR…DKYE). Residues 795-822 (LEEIQDLDKVNKKKKALELRKSAIDEKK) adopt a coiled-coil conformation. The C2 4 domain maps to 976–1094 (PIDTKQLPAN…KVEGTTELDV (119 aa)). A Phosphoserine modification is found at Ser-1000. Ca(2+) is bound by residues Asp-1008, Asp-1014, Asp-1064, Asp-1066, Ser-1069, and Asp-1072.

Belongs to the tricalbin family. Interacts with TCB2 via its C-terminal domain. Ca(2+) serves as cofactor.

The protein localises to the cell membrane. The protein resides in the endoplasmic reticulum membrane. Its function is as follows. May play a role in membrane trafficking. This chain is Tricalbin-1 (TCB1), found in Saccharomyces cerevisiae (strain ATCC 204508 / S288c) (Baker's yeast).